The sequence spans 294 residues: Acetyl-coenzyme A carboxylase carboxyl transferase subunit beta (294 aa).

One can recognise a CoA carboxyltransferase N-terminal domain in the interval 30 to 294; that stretch reads IMTKCPECKK…PEAGGESDGE (265 aa). Cys34, Cys37, Cys53, and Cys56 together coordinate Zn(2+). The C4-type zinc-finger motif lies at 34-56; that stretch reads CPECKKIMYTKELQKNLMVCNYC.

It belongs to the AccD/PCCB family. Acetyl-CoA carboxylase is a heterohexamer composed of biotin carboxyl carrier protein (AccB), biotin carboxylase (AccC) and two subunits each of ACCase subunit alpha (AccA) and ACCase subunit beta (AccD). It depends on Zn(2+) as a cofactor.

The protein localises to the cytoplasm. It carries out the reaction N(6)-carboxybiotinyl-L-lysyl-[protein] + acetyl-CoA = N(6)-biotinyl-L-lysyl-[protein] + malonyl-CoA. The protein operates within lipid metabolism; malonyl-CoA biosynthesis; malonyl-CoA from acetyl-CoA: step 1/1. Functionally, component of the acetyl coenzyme A carboxylase (ACC) complex. Biotin carboxylase (BC) catalyzes the carboxylation of biotin on its carrier protein (BCCP) and then the CO(2) group is transferred by the transcarboxylase to acetyl-CoA to form malonyl-CoA. The sequence is that of Acetyl-coenzyme A carboxylase carboxyl transferase subunit beta from Listeria innocua serovar 6a (strain ATCC BAA-680 / CLIP 11262).